A 1555-amino-acid polypeptide reads, in one-letter code: MTSVGTTLIVKPANNSGGSDGNIKNNNNNNNNNNNNNNNNNNSNSGNNSNNNSFIDDQVLHTGYLTKQGGRIQNWKIRWFVLKRGTLSYYLSPINWEYTKPRGVIYLTKKTELKEVDHRNRRHCFAVNPNYISENQSIIQQQQNQPILRSSSDSVNNNNNNNNNNNNNNNNNNNNNNNNNNNNNNNNNNNNNNNNNNNNNNNNNNSKLYPNSTRIYLISAQTVFDKSKWIEMIKLAISSDNSQDSKLKRANHQLEKVKDLVFSNRKGSIPTFPSLLNRTIATESLNDLIKVHLSKKRFYFYHDNLTLPALSYIDSESPVNLQEIHHQHLILLQQQKEELNKKLKKIQQQNNIGGGGSGSNIANSANKINNKNNDKINGVGSGEDKNNNKGGGGDNNSQSSSSSVSPTTVSPSVSPLSSSPTKPPIILSKKPLPTPPRNISTSDNGSGTDSPFYNSAITRLPLISTSVGMVGPNGMVNITSMNTTTTTTTTTTTTAPTTTNTNTNIKPLPGIQQNKLQLIQNKDGGGGGGGVLKRTNPLLSTSAPSMAYNQLVANSGIIHKHQPKIVVFHLVRDSFQISNIGGCSFNFEILSPFDPNFTLNFIPSSGTIQKGDSLTVLVELMAYNHIETDIYSTLHIIGGMEFTLFCRIETDPYLPLFLKSCAGSVLPLEKQMKMESFMKKNPTMVKSIQELAHTLILDGRNIIPLHLSNNININNNNNNGGGGSGYNIGGGSNNSIGGSGSNNNSNVNISNGWNIENSNRRNSGGCLNLVGGSGGGGLINNNINNNNNNNNNNNNNNNNNNNNNNNNNNNNNNNNNNNNNNNNNNNNNNNNNGSGLLSSSPLITISNQNTPTPQARVKLSKYILNFQRNQKKNSVGDVESVKIYQLLTDKFLISNSGSADASFQFHFPSRGKKNDLFSLSLVPTNGTVSKGEWFYIKSTLTVFVETEISEMIQLIINQREVHHILITVKCENIHPGNKEIDLEKEVVLHERLGTGATGDIYRGLISQDNLNRHISNQDSSGSNSSGSGSGHNWLIARNPSNDIINKDAIIGSGPQIIVAVKKLHPLADPSPEMIQDFYNEVRVLSMFNHPNVVKYVGGCTKIANWSIVMEYVPGGNLMDVLANPVLVIPYKLVLRMALDIAKGLHYLHSLGILHLDMKSPNLLVSSLSTSAKVNIKVADFNTCINRSRITAGFFNRHTGSGDNNKVEKDSKKGTTLWMAPEVIRGAMYSEKCDVYSFAIIMWEMVTRKLPYSHIAFNCEVEDQVLKGLRPPIPMHCNKNYTDLMEQCWDDDPENRPYFDTIIHSISKMIESNDITEQKAKASFKGLRRTQSNSTLNLLQVQNNNNNSNNNNNNNNNNNNNNSNSNLNNCNNSSPNLGTNSANNDSGVSVLQTCSDIGVGSTGTNSGTSGTNSGFDSPVIVTKDYHLISNLQKLDLHSNDGSDTNGSQIGFKSDINSKKSSLEVHSKHKSKRFSYDGGSSRASINTLNNDSNLPFKFSPPSTPQSSFLQLKKLDKELKSNLESNAGTKHSFIRYKPSFTNVTSAKSKLNLNNNNNN.

5 disordered regions span residues 1–54, 138–208, 342–452, 486–508, and 781–850; these read MTSV…NNSF, IIQQ…NSKL, KLKK…DSPF, TTTT…IKPL, and NNIN…NQNT. Composition is skewed to low complexity over residues 14–53, 138–205, 359–378, and 395–431; these read NNSG…NNNS, IIQQ…NNNN, SNIA…KING, and NNSQ…SKKP. In terms of domain architecture, PH spans 58-238; that stretch reads QVLHTGYLTK…WIEMIKLAIS (181 aa). Polar residues predominate over residues 437–452; it reads RNISTSDNGSGTDSPF. 2 stretches are compositionally biased toward low complexity: residues 486–504 and 781–832; these read TTTT…TNTN and NNIN…NNNN. Polar residues predominate over residues 833–850; the sequence is GSGLLSSSPLITISNQNT. Positions 986–1309 constitute a Protein kinase domain; the sequence is VVLHERLGTG…TIIHSISKMI (324 aa). Residue 992–1000 participates in ATP binding; it reads LGTGATGDI. The tract at residues 1012-1031 is disordered; sequence RHISNQDSSGSNSSGSGSGH. K1061 contacts ATP. The active-site Proton acceptor is the D1156. Residues 1340–1376 show a composition bias toward low complexity; the sequence is VQNNNNNSNNNNNNNNNNNNNNSNSNLNNCNNSSPNL. 2 disordered regions span residues 1340–1383 and 1457–1480; these read VQNN…SANN and KKSS…GSSR.

The protein belongs to the protein kinase superfamily. TKL Ser/Thr protein kinase family.

The catalysed reaction is L-seryl-[protein] + ATP = O-phospho-L-seryl-[protein] + ADP + H(+). The enzyme catalyses L-threonyl-[protein] + ATP = O-phospho-L-threonyl-[protein] + ADP + H(+). This Dictyostelium discoideum (Social amoeba) protein is Probable serine/threonine-protein kinase DDB_G0276181.